The following is a 246-amino-acid chain: MSGKDRLAIFPSRGAQMLMKGRLAGAQKGHGLLKKKADALQVRFRLILSKIIETKTLMGEVMKEAAFSLAEAKFTTGDFNQVVLQNVTKAQIKIRSKKDNVAGVTLPIFESYQDGSDTYELAGLARGGQQLAKLKKNFQSAVKLLVELASLQTSFVTLDEVIKITNRRVNAIEHVIIPRLERTLAYIISELDELEREEFYRLKKIQDKKKIIKDKAEAKKAALRAAGQDLRDSANLLDEGDEDLLF.

The protein belongs to the V-ATPase D subunit family. V-ATPase is a heteromultimeric enzyme made up of two complexes: the ATP-hydrolytic V1 complex and the proton translocation V0 complex. The V1 complex consists of three catalytic AB heterodimers that form a heterohexamer, three peripheral stalks each consisting of EG heterodimers, one central rotor including subunits D and F, and the regulatory subunits C and H. The proton translocation complex V0 consists of the proton transport subunit a, a ring of proteolipid subunits c9c'', rotary subunit d, subunits e and f, and the accessory subunits VhaAC45 and ATP6AP2.

Subunit of the V1 complex of vacuolar(H+)-ATPase (V-ATPase), a multisubunit enzyme composed of a peripheral complex (V1) that hydrolyzes ATP and a membrane integral complex (V0) that translocates protons. V-ATPase is responsible for acidifying and maintaining the pH of intracellular compartments and in some cell types, is targeted to the plasma membrane, where it is responsible for acidifying the extracellular environment. This is V-type proton ATPase subunit D from Manduca sexta (Tobacco hawkmoth).